Consider the following 203-residue polypeptide: Outer-membrane lipoprotein carrier protein (203 aa).

A signal peptide spans 1 to 21 (MKKLLVACCLLSGFASTSVLA).

It belongs to the LolA family. Monomer.

It is found in the periplasm. Participates in the translocation of lipoproteins from the inner membrane to the outer membrane. Only forms a complex with a lipoprotein if the residue after the N-terminal Cys is not an aspartate (The Asp acts as a targeting signal to indicate that the lipoprotein should stay in the inner membrane). This Serratia proteamaculans (strain 568) protein is Outer-membrane lipoprotein carrier protein.